The primary structure comprises 271 residues: Imidazole glycerol phosphate synthase subunit HisF (271 aa).

Active-site residues include Asp-12 and Asp-131.

This sequence belongs to the HisA/HisF family. In terms of assembly, heterodimer of HisH and HisF.

It localises to the cytoplasm. It catalyses the reaction 5-[(5-phospho-1-deoxy-D-ribulos-1-ylimino)methylamino]-1-(5-phospho-beta-D-ribosyl)imidazole-4-carboxamide + L-glutamine = D-erythro-1-(imidazol-4-yl)glycerol 3-phosphate + 5-amino-1-(5-phospho-beta-D-ribosyl)imidazole-4-carboxamide + L-glutamate + H(+). It participates in amino-acid biosynthesis; L-histidine biosynthesis; L-histidine from 5-phospho-alpha-D-ribose 1-diphosphate: step 5/9. Functionally, IGPS catalyzes the conversion of PRFAR and glutamine to IGP, AICAR and glutamate. The HisF subunit catalyzes the cyclization activity that produces IGP and AICAR from PRFAR using the ammonia provided by the HisH subunit. The protein is Imidazole glycerol phosphate synthase subunit HisF of Methanospirillum hungatei JF-1 (strain ATCC 27890 / DSM 864 / NBRC 100397 / JF-1).